Here is a 4076-residue protein sequence, read N- to C-terminus: E3 ubiquitin-protein ligase TOM1-like (4076 aa).

The segment covering 225-237 has biased composition (low complexity); sequence SSAAPAVSAGSTA. Disordered stretches follow at residues 225–256, 288–360, 748–819, 921–970, 1083–1103, 1571–1646, 1988–2041, 2067–2110, 2275–2295, 2356–2551, 2581–2634, 2782–2817, 2858–2955, 3037–3066, 3105–3132, 3216–3241, and 3353–3444; these read SSAAPAVSAGSTAKAKDKEKEKEKATGPKNVA, YPDT…RDGP, IPAE…ILPS, LEAP…NKPA, SPVQDEEPASEKRTPDVSSGT, MALD…ITRE, PADA…KRPI, NVPA…KLAK, EGDKDSRPNNPRGTDPSIGRS, SGTA…ELDY, GDDL…LLAP, IPIPPPHSRESRPTEARRDTYQEPHQAVQFSPESTH, EKAR…QAED, EQHEQRRRERQNAAGGQDLGPADMDPASIL, RQLHAQQGGQAASRSRDAQRPTEAGAGT, KQLKEKDAKTPHPLKRSLTGGTNNNG, and EEQA…QLTP. Positions 238-250 are enriched in basic and acidic residues; the sequence is KAKDKEKEKEKAT. The span at 311–320 shows a compositional bias: low complexity; the sequence is TTSSPAAPTP. A compositionally biased stretch (polar residues) spans 322-343; sequence RRSSTMNVSQSSRTQRVGSSEE. A compositionally biased stretch (acidic residues) spans 767–778; that stretch reads EGNDADDDSEDD. Residues 940-950 are compositionally biased toward basic and acidic residues; sequence VKGKGKEKATD. A compositionally biased stretch (polar residues) spans 959-969; it reads ASSSSSGNNKP. Over residues 1606-1620 the composition is skewed to polar residues; the sequence is PGTSRETNVGASTTA. The span at 1621 to 1632 shows a compositional bias: low complexity; that stretch reads PQQLPVLPSQQP. Residues 1633–1642 are compositionally biased toward polar residues; sequence ATESQSNTPR. Basic and acidic residues predominate over residues 2021–2041; it reads VTDKDMHDAPKNPAQDLKRPI. The segment covering 2086–2096 has biased composition (polar residues); the sequence is NEATPSPSGDE. The segment covering 2099-2110 has biased composition (basic and acidic residues); it reads SESKEKEKKLAK. 2 stretches are compositionally biased toward acidic residues: residues 2378–2387 and 2405–2450; these read DLTDDREETP and EFSD…DLGE. A compositionally biased stretch (low complexity) spans 2460–2469; sequence QPGVVEVLMG. Acidic residues-rich tracts occupy residues 2470-2516 and 2523-2551; these read ENDD…DLED and EEGNAIDDDGASWDDGTDEDEEDEEELDY. A compositionally biased stretch (basic and acidic residues) spans 2587–2597; the sequence is EPIRDFDGHYI. Residues 2598 to 2622 show a composition bias toward acidic residues; it reads DDDEDGEEDDDEDEGEDDMDDDMYF. Composition is skewed to basic and acidic residues over residues 2788–2803 and 2858–2912; these read HSRESRPTEARRDTYQ and EKAR…ERAE. The stretch at 2851–2929 forms a coiled coil; sequence AIQAEKEEKA…QAAADQEANA (79 aa). The segment covering 2913-2927 has biased composition (low complexity); it reads AAAQAAAQAAADQEA. A compositionally biased stretch (basic and acidic residues) spans 3037-3047; sequence EQHEQRRRERQ. A compositionally biased stretch (polar residues) spans 3108–3117; that stretch reads HAQQGGQAAS. Positions 3341–3375 form a coiled coil; it reads PLQAIERRRKEAEEQAKKKKEAEEKAATEREAANA. Positions 3353–3372 are enriched in basic and acidic residues; that stretch reads EEQAKKKKEAEEKAATEREA. Residues 3373–3414 are compositionally biased toward low complexity; that stretch reads ANAPEEQASTSTEQTPAQQEATQQPSESTPAAASGQQPAQQD. The segment covering 3415 to 3439 has biased composition (basic and acidic residues); it reads QENKELEAPKEKADEKDVQSDEKKI. The HECT domain maps to 3740 to 4076; that stretch reads KADELKFGKL…TAGSDYFGFA (337 aa). Cysteine 4043 functions as the Glycyl thioester intermediate in the catalytic mechanism.

Belongs to the UPL family. TOM1/PTR1 subfamily.

The protein resides in the nucleus. It catalyses the reaction S-ubiquitinyl-[E2 ubiquitin-conjugating enzyme]-L-cysteine + [acceptor protein]-L-lysine = [E2 ubiquitin-conjugating enzyme]-L-cysteine + N(6)-ubiquitinyl-[acceptor protein]-L-lysine.. Its pathway is protein modification; protein ubiquitination. Its function is as follows. Probable ubiquitin ligase protein, which may be involved in mRNA export. E3 ubiquitin ligase proteins mediate ubiquitination and subsequent proteasomal degradation of target proteins. Participates in mRNA export from the nucleus by regulating the transport of hnRNP proteins. The chain is E3 ubiquitin-protein ligase TOM1-like from Neurospora crassa (strain ATCC 24698 / 74-OR23-1A / CBS 708.71 / DSM 1257 / FGSC 987).